The primary structure comprises 410 residues: Cysteine desulfurase IscS (410 aa).

Pyridoxal 5'-phosphate-binding positions include 80 to 81 (AT), asparagine 160, glutamine 188, and 208 to 210 (SGH). Lysine 211 carries the post-translational modification N6-(pyridoxal phosphate)lysine. Threonine 248 serves as a coordination point for pyridoxal 5'-phosphate. The active-site Cysteine persulfide intermediate is cysteine 334. Cysteine 334 provides a ligand contact to [2Fe-2S] cluster.

It belongs to the class-V pyridoxal-phosphate-dependent aminotransferase family. NifS/IscS subfamily. As to quaternary structure, homodimer. Forms a heterotetramer with IscU, interacts with other sulfur acceptors. The cofactor is pyridoxal 5'-phosphate.

It is found in the cytoplasm. The enzyme catalyses (sulfur carrier)-H + L-cysteine = (sulfur carrier)-SH + L-alanine. It functions in the pathway cofactor biosynthesis; iron-sulfur cluster biosynthesis. Functionally, master enzyme that delivers sulfur to a number of partners involved in Fe-S cluster assembly, tRNA modification or cofactor biosynthesis. Catalyzes the removal of elemental sulfur atoms from cysteine to produce alanine. Functions as a sulfur delivery protein for Fe-S cluster synthesis onto IscU, an Fe-S scaffold assembly protein, as well as other S acceptor proteins. The chain is Cysteine desulfurase IscS from Rickettsia bellii (strain OSU 85-389).